The following is a 257-amino-acid chain: uncharacterized protein (257 aa).

Ser-127 is modified (phosphoserine). Disordered stretches follow at residues His-146–Gly-174 and Ala-210–Lys-231. Positions Pro-151–Ser-160 are enriched in polar residues. A coiled-coil region spans residues His-196–Thr-257.

This is an uncharacterized protein from Arabidopsis thaliana (Mouse-ear cress).